The primary structure comprises 91 residues: Small ribosomal subunit protein uS19 (91 aa).

It belongs to the universal ribosomal protein uS19 family.

In terms of biological role, protein S19 forms a complex with S13 that binds strongly to the 16S ribosomal RNA. This is Small ribosomal subunit protein uS19 from Delftia acidovorans (strain DSM 14801 / SPH-1).